Consider the following 211-residue polypeptide: Thymidylate kinase (211 aa).

Position 7-14 (7-14 (GIDASGKS)) interacts with ATP.

This sequence belongs to the thymidylate kinase family.

It catalyses the reaction dTMP + ATP = dTDP + ADP. Functionally, phosphorylation of dTMP to form dTDP in both de novo and salvage pathways of dTTP synthesis. The protein is Thymidylate kinase of Mesomycoplasma hyopneumoniae (strain 7448) (Mycoplasma hyopneumoniae).